A 355-amino-acid chain; its full sequence is UDP-glucose 4-epimerase uge1 (355 aa).

NAD(+) is bound at residue 8–39; sequence TVLVTGGAGYIGSHTCVVLLEKGYDVVIVDNL.

It belongs to the NAD(P)-dependent epimerase/dehydratase family. NAD(+) serves as cofactor.

It catalyses the reaction UDP-alpha-D-glucose = UDP-alpha-D-galactose. The protein operates within carbohydrate metabolism; galactose metabolism. In terms of biological role, major UDP-glucose/-galactose 4-epimerase under glucose-rich conditions involved in protein galactosylation. The sequence is that of UDP-glucose 4-epimerase uge1 (uge1) from Schizosaccharomyces pombe (strain 972 / ATCC 24843) (Fission yeast).